Here is a 669-residue protein sequence, read N- to C-terminus: MSESKQQYLEELKQQLHYHAVRYYVEDNPEIPDAEYDRMMRELMAIEAEHPEWISVDSPSQRVGGVALDSFRQVTHEIPMLSLDNAFSDEELESFLKRAQDRMPSAHIDAFCCEPKLDGLAVSLLYENGVLVQAATRGDGTTGENITENVRTIASVPLKLQGEGWPSRIEVRGEVFMPKVGFEKLNDIARKKGEKVFVNPRNAAAGSLRQLDSKITATRPLAFYAYSVGVVEGISLSSSHYQRFLQLKQWGLPMCPETKLVNGLESVKAFYADILNRRDALPYEIDGVVIKIDDIVIQEKLGFVARAPRWAIAYKFPAQEELTLLNDVEFQVGRTGAITPVAKLEPVFVGGVTVSNATLHNADEIERLGVMVGDTVVIRRAGDVIPQIVSVVKERRKGDENPIVFPTSCPVCHSHVERIEGEAVTRCSGGLVCQAQRKEALKHFVSRKALDVDGLGDKVIEQLVDKEMVETPADLFTLSAGVLTVLERMGPKSAQNIVNALNVAKETTLARFLYSLGIREVGEATAANLARHFKTLEAIQTATHEQLIEVPDIGEVVARHITAFFAEEKNQRVVQALIEQGIVWPPVEELGSEIPQPLAGKVVVLTGTLTQLSRGDAKAALERLGAKVTGSVSKKTDIVFAGEAAGSKLTKAQELGVEIQTEQDLLALL.

NAD(+) contacts are provided by residues 33–37, 82–83, and Glu-114; these read DAEYD and SL. The N6-AMP-lysine intermediate role is filled by Lys-116. Arg-137, Glu-174, Lys-291, and Lys-315 together coordinate NAD(+). Zn(2+)-binding residues include Cys-409, Cys-412, Cys-427, and Cys-433. The 77-residue stretch at 593–669 folds into the BRCT domain; the sequence is EIPQPLAGKV…QTEQDLLALL (77 aa).

The protein belongs to the NAD-dependent DNA ligase family. LigA subfamily. Mg(2+) serves as cofactor. It depends on Mn(2+) as a cofactor.

The catalysed reaction is NAD(+) + (deoxyribonucleotide)n-3'-hydroxyl + 5'-phospho-(deoxyribonucleotide)m = (deoxyribonucleotide)n+m + AMP + beta-nicotinamide D-nucleotide.. Functionally, DNA ligase that catalyzes the formation of phosphodiester linkages between 5'-phosphoryl and 3'-hydroxyl groups in double-stranded DNA using NAD as a coenzyme and as the energy source for the reaction. It is essential for DNA replication and repair of damaged DNA. In Vibrio vulnificus (strain YJ016), this protein is DNA ligase.